The primary structure comprises 524 residues: Beta-glucosidase 22 (524 aa).

A signal peptide spans 1 to 24 (MALQKFPLLGLLFLITIVVSSTIA). Residue Gln-55 participates in a beta-D-glucoside binding. Asn-61 carries N-linked (GlcNAc...) asparagine glycosylation. Residues His-158 and 203-204 (NE) contribute to the a beta-D-glucoside site. Glu-204 functions as the Proton donor in the catalytic mechanism. Cys-223 and Cys-230 form a disulfide bridge. A beta-D-glucoside contacts are provided by residues Tyr-346, Glu-418, Trp-468, 475-476 (EW), and Phe-484. Glu-418 (nucleophile) is an active-site residue. Residue Asn-494 is glycosylated (N-linked (GlcNAc...) asparagine). The Prevents secretion from ER motif lies at 521–524 (KDEL).

The protein belongs to the glycosyl hydrolase 1 family. In terms of assembly, component of the PYK10 complex, at least composed of PYK10/BGLU23, BGLU21, BGLU22, JAL22, JAL23, PBP1/JAL30, PBP2/JAL31, JAL32, JAL33, JAL34, JAL35, GLL22 and GLL23. Expressed exclusively in roots.

The protein resides in the endoplasmic reticulum lumen. It catalyses the reaction Hydrolysis of terminal, non-reducing beta-D-glucosyl residues with release of beta-D-glucose.. Its activity is regulated as follows. Activated upon binding to PBP1 or PBP2. Beta-D-glucosidase active on scopolin &gt;&gt; esculin &gt;&gt; 4-MU-glucoside. No activity with DIMBOA-glucoside, pNP-glucoside, oNP-glucoside and sinigrin as substrates. The polypeptide is Beta-glucosidase 22 (Arabidopsis thaliana (Mouse-ear cress)).